The chain runs to 568 residues: Methyl-accepting chemotaxis protein CtpH (568 aa).

Topologically, residues 1–39 (MPASPGHRDVLGCLVAACVPVQPGNPSRRSMLQQSLRAQ) are cytoplasmic. The helical transmembrane segment at 40-60 (ILVLLGGSLAALLLIALACFG) threads the bilayer. The Periplasmic segment spans residues 61 to 216 (SLTGDVRAYR…ISAEARRTML (156 aa)). A helical transmembrane segment spans residues 217–237 (LGSLVLIGASLAVALLSLWLV). The Cytoplasmic portion of the chain corresponds to 238–568 (NRNLVRPVQR…LGDALQRLRA (331 aa)). Residues 239–291 (RNLVRPVQRLIEHIAQLSHGDFGERIEIRRKDELGKLALAANTLRDFLVDIFD) form the HAMP domain. A Methyl-accepting transducer domain is found at 296 to 532 (STRDLDSASG…EISRNLTEIA (237 aa)).

Belongs to the methyl-accepting chemotaxis (MCP) protein family.

The protein resides in the cell inner membrane. In terms of biological role, chemotactic-signal transducers respond to changes in the concentration of attractants and repellents in the environment, transduce a signal from the outside to the inside of the cell, and facilitate sensory adaptation through the variation of the level of methylation. Chemoreceptor for inorganic phosphate, which is required for taxis at high concentrations of phosphate. Recognizes inorganic phosphate directly. Can also bind to other components that have a pyrophosphate group, including ATP and ADP. In Pseudomonas aeruginosa (strain ATCC 15692 / DSM 22644 / CIP 104116 / JCM 14847 / LMG 12228 / 1C / PRS 101 / PAO1), this protein is Methyl-accepting chemotaxis protein CtpH.